The sequence spans 747 residues: AMP deaminase 1 (747 aa).

Phosphothreonine is present on Thr-81. The residue at position 85 (Ser-85) is a Phosphoserine. Residue Tyr-216 is modified to Phosphotyrosine. Residues His-303 and His-305 each coordinate Zn(2+). Substrate-binding positions include His-305 and 374 to 379 (KFNDKY). A Phosphoserine modification is found at Ser-441. Residue His-572 participates in Zn(2+) binding. Glu-575 provides a ligand contact to substrate. His-594 serves as the catalytic Proton acceptor. Position 649 (Asp-649) interacts with Zn(2+). A substrate-binding site is contributed by 650–653 (DPMQ).

It belongs to the metallo-dependent hydrolases superfamily. Adenosine and AMP deaminases family. Homotetramer. It depends on Zn(2+) as a cofactor.

It catalyses the reaction AMP + H2O + H(+) = IMP + NH4(+). It participates in purine metabolism; IMP biosynthesis via salvage pathway; IMP from AMP: step 1/1. AMP deaminase plays a critical role in energy metabolism. The protein is AMP deaminase 1 of Rattus norvegicus (Rat).